A 1029-amino-acid chain; its full sequence is Beta-galactosidase 2 (1029 aa).

Substrate is bound by residues asparagine 104 and aspartate 203. Aspartate 203 lines the Na(+) pocket. 3 residues coordinate Mg(2+): glutamate 418, histidine 420, and glutamate 463. Substrate contacts are provided by residues glutamate 463 and 539–542 (EYAH). The active-site Proton donor is the glutamate 463. Glutamate 539 functions as the Nucleophile in the catalytic mechanism. A Mg(2+)-binding site is contributed by asparagine 599. Residues phenylalanine 603 and asparagine 606 each contribute to the Na(+) site. Substrate-binding residues include asparagine 606 and tryptophan 1004.

It belongs to the glycosyl hydrolase 2 family. In terms of assembly, homotetramer. Mg(2+) serves as cofactor. The cofactor is Na(+).

The enzyme catalyses Hydrolysis of terminal non-reducing beta-D-galactose residues in beta-D-galactosides.. This Enterobacter cloacae protein is Beta-galactosidase 2.